A 160-amino-acid chain; its full sequence is MAEVLQSLDALGAANVAAVQPDAPVHVQKLDKYGRAYATGKRKNAVARVWVRPGTGKVTINDRDIEVYFARPVLRLMINQPFQAAAREGQYDVVCTVSGGGLSGQAGAVRHGISKALTYYEPELRSPLKKGGFITRDSRVVERKKYGRAKARRSFQFSKR.

Belongs to the universal ribosomal protein uS9 family.

The polypeptide is Small ribosomal subunit protein uS9 (Xanthobacter autotrophicus (strain ATCC BAA-1158 / Py2)).